The primary structure comprises 265 residues: Silaffin-1 (265 aa).

The N-terminal stretch at 1-19 (MKLTAIFPLLFTAVGYCAA) is a signal peptide. A propeptide spans 20-107 (QSIADLAAAN…DSEEEELRIL (88 aa)) (acidic). The disordered stretch occupies residues 37 to 106 (SAQLISADSS…EDSEEEELRI (70 aa)). Over residues 51–90 (DSSVESVDAASSDVSGSSVESVDVSGSSLESVDVSGSSLE) the composition is skewed to low complexity. Over residues 91–103 (SVDDSSEDSEEEE) the composition is skewed to acidic residues. The R1; atypical repeat unit spans residues 108–140 (SSKKSGSYYSYGTKKSGSYSGYSTKKSASRRIL). The 7 X 19 AA repeat of S-S-K-K-S-G-S-Y-S-G-S-K-G-S-K-R-R-[IL]-L stretch occupies residues 108 to 257 (SSKKSGSYYS…GSKGSKRRIL (150 aa)). Lys110 is subject to N6-poly(methylaminopropyl)lysine. At Lys111 the chain carries N6,N6-dimethyllysine. Low complexity predominate over residues 122–133 (KSGSYSGYSTKK). The interval 122–265 (KSGSYSGYST…ILSGGLRGSM (144 aa)) is disordered. Residues 137–140 (RRIL) constitute a propeptide that is removed on maturation. An R2; atypical repeat occupies 141-162 (SSKKSGSYSGYSTKKSGSRRIL). Positions 142 to 155 (SKKSGSYSGYSTKK) are enriched in low complexity. Residue Lys143 is modified to N6-poly(methylaminopropyl)lysine. Lys144 bears the N6,N6-dimethyllysine mark. Lys154 is modified (N6-poly(methylaminopropyl)lysine). Lys155 is modified (N6,N6-dimethyllysine). The propeptide occupies 159–162 (RRIL). 2 positions are modified to phosphoserine: Ser163 and Ser164. Residues 163-181 (SSKKSGSYSGSKGSKRRIL) form an R3 repeat. Residues 164-174 (SKKSGSYSGSK) are compositionally biased toward low complexity. Lys165 carries the post-translational modification N6-poly(methylaminopropyl)lysine. Lys166 is subject to N6,N6-dimethyllysine. 4 positions are modified to phosphoserine: Ser167, Ser169, Ser171, and Ser173. N6,N6,N6-trimethyl-5-hydroxylysine is present on Lys174. Phosphoserine is present on Ser176. Lys177 is subject to N6-poly(methylaminopropyl)lysine. A propeptide spanning residues 178–181 (RRIL) is cleaved from the precursor. Residues Ser182 and Ser183 each carry the phosphoserine modification. The R4 repeat unit spans residues 182-200 (SSKKSGSYSGSKGSKRRNL). A compositionally biased stretch (low complexity) spans 183-193 (SKKSGSYSGSK). Lys184 is subject to N6-poly(methylaminopropyl)lysine. Lys185 is subject to N6,N6-dimethyllysine. Phosphoserine is present on residues Ser186, Ser188, Ser190, and Ser192. Residue Lys193 is modified to N6,N6,N6-trimethyl-5-hydroxylysine. Residue Ser195 is modified to Phosphoserine. Lys196 is subject to N6-poly(methylaminopropyl)lysine. The propeptide occupies 197-200 (RRNL). A phosphoserine mark is found at Ser201 and Ser202. An R5 repeat occupies 201–219 (SSKKSGSYSGSKGSKRRIL). A compositionally biased stretch (low complexity) spans 202–212 (SKKSGSYSGSK). N6-poly(methylaminopropyl)lysine is present on Lys203. Lys204 carries the post-translational modification N6,N6-dimethyllysine. A phosphoserine mark is found at Ser205, Ser207, Ser209, and Ser211. Lys212 carries the post-translational modification N6,N6,N6-trimethyl-5-hydroxylysine. Position 214 is a phosphoserine (Ser214). An N6-poly(methylaminopropyl)lysine modification is found at Lys215. Residues 216–219 (RRIL) constitute a propeptide that is removed on maturation. Phosphoserine is present on residues Ser220 and Ser221. Residues 220–238 (SSKKSGSYSGSKGSKRRNL) form an R6 repeat. The segment covering 221–231 (SKKSGSYSGSK) has biased composition (low complexity). Lys222 is modified (N6-poly(methylaminopropyl)lysine). Residue Lys223 is modified to N6,N6-dimethyllysine. Phosphoserine is present on residues Ser224, Ser226, Ser228, and Ser230. Lys231 bears the N6,N6,N6-trimethyl-5-hydroxylysine mark. Ser233 bears the Phosphoserine mark. Position 234 is an N6-poly(methylaminopropyl)lysine (Lys234). Positions 235-238 (RRNL) are excised as a propeptide. A phosphoserine mark is found at Ser239 and Ser240. The R7 repeat unit spans residues 239–257 (SSKKSGSYSGSKGSKRRIL). The span at 240 to 250 (SKKSGSYSGSK) shows a compositional bias: low complexity. Lys241 bears the N6-poly(methylaminopropyl)lysine mark. Lys242 carries the post-translational modification N6,N6-dimethyllysine. Phosphoserine occurs at positions 243, 245, 247, and 249. The residue at position 250 (Lys250) is an N6,N6,N6-trimethyl-5-hydroxylysine. Position 252 is a phosphoserine (Ser252). Lys253 carries the post-translational modification N6-poly(methylaminopropyl)lysine. Positions 254-265 (RRILSGGLRGSM) are excised as a propeptide.

Silaffin-1A peptides form large aggregates via electrostatic interactions due to intermolecular interactions between the negatively charged phosphate groups and the polyamine moieties. Post-translationally, N6-polymethylaminopropylated. Two lysine residues of each peptide bears 6 to 11 repeats of methyl-propylamine, which gives a possible template for nucleation, and may also control the silica colloid size within the silica deposition vesicle (SDV). Phosphorylated. All serine residues of the Silaffin-1A1 peptide are phosphorylated. Only minor amounts of the Silaffin-1A2 peptide are phosphorylated. Phosphorylation is essential for the activity. It may represent a source of anions required for silica formation of diatoms.

In terms of biological role, catalyzes the polymerization of silica spheres from a silicilic acid solution. It therefore plays a central role in the formation of silica cell wall of diatoms. This is Silaffin-1 (SIL1) from Cylindrotheca fusiformis (Marine diatom).